Reading from the N-terminus, the 173-residue chain is Shikimate kinase 1 (173 aa).

14 to 19 (GAGKST) contacts ATP. Residue serine 18 coordinates Mg(2+). Substrate-binding residues include aspartate 36, arginine 60, and glycine 82. Arginine 120 provides a ligand contact to ATP. Arginine 140 contributes to the substrate binding site.

It belongs to the shikimate kinase family. Monomer. The cofactor is Mg(2+).

It is found in the cytoplasm. The enzyme catalyses shikimate + ATP = 3-phosphoshikimate + ADP + H(+). The protein operates within metabolic intermediate biosynthesis; chorismate biosynthesis; chorismate from D-erythrose 4-phosphate and phosphoenolpyruvate: step 5/7. Its function is as follows. Catalyzes the specific phosphorylation of the 3-hydroxyl group of shikimic acid using ATP as a cosubstrate. This chain is Shikimate kinase 1, found in Hamiltonella defensa subsp. Acyrthosiphon pisum (strain 5AT).